The following is a 668-amino-acid chain: DNA-directed RNA polymerase subunit beta' (668 aa).

Zn(2+) contacts are provided by cysteine 71, cysteine 73, cysteine 91, and cysteine 94. Mg(2+) is bound by residues aspartate 505, aspartate 507, and aspartate 509.

The protein belongs to the RNA polymerase beta' chain family. RpoC1 subfamily. In plastids the minimal PEP RNA polymerase catalytic core is composed of four subunits: alpha, beta, beta', and beta''. When a (nuclear-encoded) sigma factor is associated with the core the holoenzyme is formed, which can initiate transcription. Mg(2+) serves as cofactor. It depends on Zn(2+) as a cofactor.

It is found in the plastid. The protein localises to the chloroplast. It catalyses the reaction RNA(n) + a ribonucleoside 5'-triphosphate = RNA(n+1) + diphosphate. In terms of biological role, DNA-dependent RNA polymerase catalyzes the transcription of DNA into RNA using the four ribonucleoside triphosphates as substrates. In Mesostigma viride (Green alga), this protein is DNA-directed RNA polymerase subunit beta'.